We begin with the raw amino-acid sequence, 589 residues long: Bifunctional protein TrpGD (589 aa).

One can recognise a Glutamine amidotransferase type-1 domain in the interval 46–241 (RVIVIDNYDS…LNIQDIQVKK (196 aa)). Residue 99–101 (GPG) participates in L-glutamine binding. Catalysis depends on cysteine 126, which acts as the Nucleophile; for GATase activity. L-glutamine-binding positions include glutamine 130 and 176–177 (SL). Catalysis depends on for GATase activity residues histidine 215 and glutamate 217. An anthranilate phosphoribosyltransferase region spans residues 253-589 (ALKKLVEFED…MDYQKTLGNS (337 aa)).

This sequence in the C-terminal section; belongs to the anthranilate phosphoribosyltransferase family. Heterotetramer consisting of two non-identical subunits: a beta subunit (TrpG) and a large alpha subunit (TrpE).

The catalysed reaction is chorismate + L-glutamine = anthranilate + pyruvate + L-glutamate + H(+). It carries out the reaction N-(5-phospho-beta-D-ribosyl)anthranilate + diphosphate = 5-phospho-alpha-D-ribose 1-diphosphate + anthranilate. Its pathway is amino-acid biosynthesis; L-tryptophan biosynthesis; L-tryptophan from chorismate: step 1/5. It functions in the pathway amino-acid biosynthesis; L-tryptophan biosynthesis; L-tryptophan from chorismate: step 2/5. Part of a heterotetrameric complex that catalyzes the two-step biosynthesis of anthranilate, an intermediate in the biosynthesis of L-tryptophan. In the first step, the glutamine-binding beta subunit (TrpG) of anthranilate synthase (AS) provides the glutamine amidotransferase activity which generates ammonia as a substrate that, along with chorismate, is used in the second step, catalyzed by the large alpha subunit of AS (TrpE) to produce anthranilate. In the absence of TrpG, TrpE can synthesize anthranilate directly from chorismate and high concentrations of ammonia. In addition to synthesizing anthranilate, it also catalyzes the second step of the pathway, the transfer of the phosphoribosyl group of 5-phosphorylribose-1-pyrophosphate (PRPP) to anthranilate. This chain is Bifunctional protein TrpGD (trpGD), found in Thermotoga maritima (strain ATCC 43589 / DSM 3109 / JCM 10099 / NBRC 100826 / MSB8).